A 91-amino-acid chain; its full sequence is Large ribosomal subunit protein uL23 (91 aa).

Belongs to the universal ribosomal protein uL23 family. In terms of assembly, part of the 50S ribosomal subunit. Contacts protein L29, and trigger factor when it is bound to the ribosome.

Functionally, one of the early assembly proteins it binds 23S rRNA. One of the proteins that surrounds the polypeptide exit tunnel on the outside of the ribosome. Forms the main docking site for trigger factor binding to the ribosome. The sequence is that of Large ribosomal subunit protein uL23 from Staphylococcus epidermidis (strain ATCC 35984 / DSM 28319 / BCRC 17069 / CCUG 31568 / BM 3577 / RP62A).